A 449-amino-acid chain; its full sequence is MTTTISQLNITPIKFTINDLIVDPVSLSENFNCPICEECIMDVNKCEALQCKEGHVHCRLCWMKSLESKKECMTCRTRVNSVDSLSKNIYLQKEFRNKKIFCPNLFRILNSGKIEIDEKFGCKEILKVDELEGHIKECQFQFIECPNDKECKTRLRKNQLKDHAEKCKKLKSECEFCGEKGLVIDDSKVHYSECEKFPIKCPQNCNSPTFNCTIERGRIKYHIENECPFTVIQCKYREAGCMLEFPRSELSEHMKLIDHSKYMEATIDQHICKFEKSEKEYKKLELEYNRLKDDFKILQSELKVIRELKFNYQNKWVITNWSQKLQDYPKPKSIESPEFMVGNLKFKIQFYPNGGLSDESKDFLSIYLYKFDDQTPSKVQFSFELLNKDFTRNRKLASTNIFHTENKWGWRSFINNSLVTTQTGFVIQNSVTLNINIEILPEEKEAFTS.

The RING-type; degenerate zinc-finger motif lies at 33-76; it reads CPICEECIMDVNKCEALQCKEGHVHCRLCWMKSLESKKECMTCR. 2 consecutive TRAF-type zinc fingers follow at residues 133–187 and 189–251; these read GHIK…IDDS and VHYS…SELS. Positions 263–309 form a coiled coil; it reads MEATIDQHICKFEKSEKEYKKLELEYNRLKDDFKILQSELKVIRELK. Positions 311–437 constitute an MATH domain; the sequence is NYQNKWVITN…QNSVTLNINI (127 aa).

The protein belongs to the TNF receptor-associated factor family. A subfamily.

The protein localises to the cytoplasm. Its function is as follows. Probable adapter protein and signal transducer that links members of the tumor necrosis factor receptor family to different signaling pathways by association with the receptor cytoplasmic domain and kinases. This chain is TNF receptor-associated factor family protein DDB_G0272340, found in Dictyostelium discoideum (Social amoeba).